We begin with the raw amino-acid sequence, 297 residues long: Putative F-box protein At2g19630 (297 aa).

The region spanning 11–60 (TKNSLQIPIDLIIEIFLRLSVNSIARCRCVSKQWASTLSRPYFTELFLTR) is the F-box domain.

In Arabidopsis thaliana (Mouse-ear cress), this protein is Putative F-box protein At2g19630.